A 202-amino-acid chain; its full sequence is Glycerol-3-phosphate acyltransferase (202 aa).

Helical transmembrane passes span N3–A23, I61–L81, L87–F107, G118–I138, I144–N164, and L167–L187.

It belongs to the PlsY family. As to quaternary structure, probably interacts with PlsX.

It is found in the cell inner membrane. The enzyme catalyses an acyl phosphate + sn-glycerol 3-phosphate = a 1-acyl-sn-glycero-3-phosphate + phosphate. Its pathway is lipid metabolism; phospholipid metabolism. Catalyzes the transfer of an acyl group from acyl-phosphate (acyl-PO(4)) to glycerol-3-phosphate (G3P) to form lysophosphatidic acid (LPA). This enzyme utilizes acyl-phosphate as fatty acyl donor, but not acyl-CoA or acyl-ACP. This Campylobacter jejuni subsp. jejuni serotype O:6 (strain 81116 / NCTC 11828) protein is Glycerol-3-phosphate acyltransferase.